A 335-amino-acid chain; its full sequence is Dolichyl-diphosphooligosaccharide--protein glycosyltransferase subunit MAGT1 (335 aa).

Residues 1–29 (MAAGWWFWCVSVTVAVALLIVCDVPSVSA) form the signal peptide. Topologically, residues 30–184 (QRKKEMVLSE…DVNIRVIRPP (155 aa)) are extracellular. The 129-residue stretch at 47–175 (WTNKRPVIRM…IARWIADRTD (129 aa)) folds into the Thioredoxin domain. Asn71 is a glycosylation site (N-linked (GlcNAc...) asparagine). A disulfide bridge links Cys87 with Cys90. Residues 185-205 (NYAGPLMLGLLLAVIGGLVYL) form a helical membrane-spanning segment. Residues 206–209 (RRSN) lie on the Cytoplasmic side of the membrane. The chain crosses the membrane as a helical span at residues 210 to 230 (MEFLFNKTGWAFAALCFVLAM). The Extracellular segment spans residues 231 to 270 (TSGQMWNHIRGPPYAHKNPHTGHVNYIHGSSQAQFVAETH). The helical transmembrane segment at 271–291 (IVLLFNGGVTLGMVLLCEAAT) threads the bilayer. Residues 292 to 300 (SDMDIGKRK) lie on the Cytoplasmic side of the membrane. A helical membrane pass occupies residues 301–321 (IMCVAGIGLVVLFFSWMLSIF). The Extracellular portion of the chain corresponds to 322–335 (RSKYHGYPYSFLMS).

Belongs to the OST3/OST6 family. Accessory component of the STT3B-containing form of the oligosaccharyltransferase (OST) complex. OST exists in two different complex forms which contain common core subunits RPN1, RPN2, OST48, OST4, DAD1 and TMEM258, either STT3A or STT3B as catalytic subunits, and form-specific accessory subunits. OST can form stable complexes with the Sec61 complex or with both the Sec61 and TRAP complexes. The association of TUSC3 or MAGT1 with the STT3B-containing complex seems to be mutually exclusvice.

The protein resides in the cell membrane. It is found in the endoplasmic reticulum. The protein localises to the endoplasmic reticulum membrane. It participates in protein modification; protein glycosylation. In terms of biological role, accessory component of the STT3B-containing form of the N-oligosaccharyl transferase (OST) complex which catalyzes the transfer of a high mannose oligosaccharide from a lipid-linked oligosaccharide donor to an asparagine residue within an Asn-X-Ser/Thr consensus motif in nascent polypeptide chains. Involved in N-glycosylation of STT3B-dependent substrates. Specifically required for the glycosylation of a subset of acceptor sites that are near cysteine residues; in this function seems to act redundantly with TUSC3. In its oxidized form proposed to form transient mixed disulfides with a glycoprotein substrate to facilitate access of STT3B to the unmodified acceptor site. Also has oxidoreductase-independent functions in the STT3B-containing OST complex possibly involving substrate recognition. Could indirectly play a role in Mg(2+) transport in epithelial cells. This is Dolichyl-diphosphooligosaccharide--protein glycosyltransferase subunit MAGT1 from Pongo abelii (Sumatran orangutan).